An 833-amino-acid chain; its full sequence is Vacuolar protein sorting-associated protein 16 homolog (833 aa).

This sequence belongs to the VPS16 family. As to quaternary structure, component of the homotypic fusion and vacuole protein sorting (HOPS) complex, composed of Vps16A, car/Vps33A, dor/Vps18, Vps39, Vps11 and lt/Vps41. Interacts with Syx17 (via SNARE domain); the interaction may involve multiple components of the HOPS complex and may promote assembly of the Syx17-Snap29-Vamp7 trans-SNARE complex. Component of the class C core vacuole/endosome tethering (CORVET) complex composed of at least Vps8, dor/Vps18, car/Vps33A and Vps16A; unlike in other species, Vps11 is not part of the Drosophila complex. Due to the reduced number of components the Drosophila CORVET complex is often referred to as the miniCORVET complex. The tethering complex core made up of Vps16A, car/Vps33A and dor/Vps18 and shared by both HOPS and CORVET, preferentially associates with CORVET-specific Vps8 over HOPS-specific lt/Vps41. Interacts with Rab2 (GTP-bound form).

Its subcellular location is the late endosome membrane. It localises to the lysosome membrane. The protein resides in the cytoplasmic vesicle. It is found in the autophagosome. Core component of the class C core vacuole/endosome tethering (CORVET) and the homotypic fusion and vacuole protein sorting (HOPS) tethering complexes involved in endo-lysosomal vesicle trafficking and lysosome biogenesis. The CORVET complex facilitates docking and fusion of endosomal vesicles during endosome maturation, acts upstream of HOPS, but is not involved in autophagic flux. The CORVET complex may cooperate with the early endosomal tether Rbsn-5 to mediate endosomal fusion. The HOPS complex facilitates docking and fusion of lysosomes with late endosomes and several other types of vesicles. The HOPS complex is also involved in autophagy and crinophagy (the elimination of unused secretory granules through their fusion with lysosomes). The HOPS complex mediates autophagocitic flux, probably by binding autophagosome-associated Syx17/syntaxin 17, promoting assembly of the trans-SNARE complex and instigating autophagosome-lysosome fusion. Independent of Syx17/syntaxin 17, HOPS is involved in biosynthetic transport to lysosomes and lysosome-related organelles such as eye-pigment granules. Required for endocytic degradation of boss/bride of sevenless and N/Notch in developing ommatidia. This Drosophila melanogaster (Fruit fly) protein is Vacuolar protein sorting-associated protein 16 homolog.